Here is a 523-residue protein sequence, read N- to C-terminus: Putative F-box protein At1g30925 (523 aa).

Residues 4 to 44 (FPNDDLVYEILLRLPAKSVARCSCVSKLRRSILSRQDFTEL) form the F-box domain.

This Arabidopsis thaliana (Mouse-ear cress) protein is Putative F-box protein At1g30925.